Reading from the N-terminus, the 557-residue chain is Aspartate--tRNA ligase (557 aa).

Glu168 is a binding site for L-aspartate. The interval 192–195 (QIYK) is aspartate. An L-aspartate-binding site is contributed by Arg214. ATP-binding positions include 214-216 (RDE) and Gln223. His423 is an L-aspartate binding site. Glu457 is a binding site for ATP. Residue Arg464 participates in L-aspartate binding. ATP is bound at residue 505-508 (GLDR).

The protein belongs to the class-II aminoacyl-tRNA synthetase family. Type 1 subfamily. As to quaternary structure, homodimer.

The protein resides in the cytoplasm. The catalysed reaction is tRNA(Asp) + L-aspartate + ATP = L-aspartyl-tRNA(Asp) + AMP + diphosphate. Functionally, catalyzes the attachment of L-aspartate to tRNA(Asp) in a two-step reaction: L-aspartate is first activated by ATP to form Asp-AMP and then transferred to the acceptor end of tRNA(Asp). The chain is Aspartate--tRNA ligase from Mycoplasma pneumoniae (strain ATCC 29342 / M129 / Subtype 1) (Mycoplasmoides pneumoniae).